The following is a 620-amino-acid chain: Transcription factor kayak (620 aa).

Disordered regions lie at residues 1–36 and 184–288; these read MKVK…SNGV and SDTD…EKRR. A compositionally biased stretch (polar residues) spans 184–194; the sequence is SDTDDSNASWN. Composition is skewed to low complexity over residues 201 to 233 and 249 to 266; these read GDTT…GANN and ANNN…PAAR. The bZIP domain occupies 284 to 347; the sequence is EEKRRIRRER…NQLKYVIEAH (64 aa). The segment at 286-305 is basic motif; it reads KRRIRRERNKAAAARCRKRR. A leucine-zipper region spans residues 312–340; that stretch reads LTEEVDALVKKGDTLKAEITTLTELRNQL. The interval 375–414 is disordered; the sequence is STGGSSCGSVHSNHSHNNNNNNNNSNDSSSGTITGFDATL. Residues 377–405 show a composition bias toward low complexity; sequence GGSSCGSVHSNHSHNNNNNNNNSNDSSSG. Serine 422 bears the Phosphoserine mark. 2 disordered regions span residues 447–466 and 590–620; these read GLDS…AKRA and SGPL…LCPL.

The protein belongs to the bZIP family. Fos subfamily. Homodimer. Heterodimer with Jra. The kay-Jra heterodimer binds more stably to the AP-1 site than either of the two proteins alone.

The protein resides in the nucleus. Developmentally regulated transcription factor AP-1 binds and recognizes the enhancer DNA sequence: 5'-TGA[CG]TCA-3'. May play a role in the function or determination of a particular subset of cells in the developing embryo. It is able to carry out its function either independently of or in conjunction with Jra. The protein is Transcription factor kayak of Drosophila willistoni (Fruit fly).